The following is a 132-amino-acid chain: Holo-[acyl-carrier-protein] synthase (132 aa).

Residues aspartate 8 and glutamate 62 each contribute to the Mg(2+) site.

This sequence belongs to the P-Pant transferase superfamily. AcpS family. Mg(2+) serves as cofactor.

It is found in the cytoplasm. It catalyses the reaction apo-[ACP] + CoA = holo-[ACP] + adenosine 3',5'-bisphosphate + H(+). Transfers the 4'-phosphopantetheine moiety from coenzyme A to a Ser of acyl-carrier-protein. In Methylibium petroleiphilum (strain ATCC BAA-1232 / LMG 22953 / PM1), this protein is Holo-[acyl-carrier-protein] synthase.